The sequence spans 345 residues: Probable aldo-keto reductase 4 (345 aa).

Y63 (proton donor) is an active-site residue. H130 serves as a coordination point for substrate. 209-219 (SPLGRGFFASG) is an NADP(+) binding site.

Belongs to the aldo/keto reductase family.

This chain is Probable aldo-keto reductase 4, found in Arabidopsis thaliana (Mouse-ear cress).